A 441-amino-acid polypeptide reads, in one-letter code: Capsid protein (441 aa).

The disordered stretch occupies residues 26–63; sequence DSKKKQPIYQNSSESEESETENKNFIYDFSSEEDFEEP. The Nuclear localization signal motif lies at 77 to 79; the sequence is KRK. The CCHC-type zinc-finger motif lies at 381 to 398; that stretch reads CQCWLCHEEGHYANECPK.

Belongs to the caulimoviridae capsid protein family. In terms of assembly, interacts (via nuclear localization signal) with host importin alpha.

The protein localises to the virion. The protein resides in the host nucleus. Functionally, self assembles to form an icosahedral capsid, about 50 nm in diameter, nm, composed of 420 subunits of the viral capsid protein. The capsid encapsulates the genomic dsDNA. Following virus entry into host cell, provides nuclear import of the viral genome. Virus particles do not enter the nucleus, but dock at the nuclear membrane through the interaction with host importins. The protein is Capsid protein of Soybean chlorotic mottle virus.